Reading from the N-terminus, the 87-residue chain is Toxin Cll3 (87 aa).

The first 19 residues, 1-19, serve as a signal peptide directing secretion; it reads MNSLLMITACLAVIGTVWA. The region spanning 20–85 is the LCN-type CS-alpha/beta domain; it reads KEGYIVNYYD…VWPLPNKTCY (66 aa). 4 cysteine pairs are disulfide-bonded: Cys31–Cys84, Cys35–Cys60, Cys44–Cys65, and Cys48–Cys67. Tyr85 carries the post-translational modification Tyrosine amide.

Belongs to the long (4 C-C) scorpion toxin superfamily. Sodium channel inhibitor family. Beta subfamily. In terms of tissue distribution, expressed by the venom gland.

It localises to the secreted. In terms of biological role, beta toxins bind voltage-independently at site-4 of sodium channels (Nav) and shift the voltage of activation toward more negative potentials thereby affecting sodium channel activation and promoting spontaneous and repetitive firing. The polypeptide is Toxin Cll3 (Centruroides limpidus (Mexican scorpion)).